The following is a 332-amino-acid chain: MSLHLSNVILHQLCKNDQDELVVKLRPASLENDTSTENLVAELHRVFHSKAGKGFGSFQSDSEFQFWLQEMRKGERDFYDFSQISANRLKEELIKYPFADEGILVFAEYQSLATDYLFIGILPMNQSLKVTEGLDIDATDYLDITKMDIAARIDLSSYDTDRESNRYLSYIKGRVGRKVADFFLDFLQADVGLDTKQQNQVLMQAVEDFCADSKLEKQEANEYKKQVYNYCNEQIKSGDEVQISELSGELPPSQDGTSFMDFTKEQGYELEESFPGDRSTVRKLTKYVGAGGGLNISFDSLLLGERIFYDPETDTLTIKGTPPNLKDQLSRN.

Belongs to the YejK family.

It is found in the cytoplasm. It localises to the nucleoid. This Vibrio campbellii (strain ATCC BAA-1116) protein is Nucleoid-associated protein VIBHAR_03026.